A 114-amino-acid polypeptide reads, in one-letter code: Transmembrane protein 14B (114 aa).

4 helical membrane-spanning segments follow: residues 8-28, 34-54, 60-80, and 83-103; these read LVPL…GGIV, GSVP…LGAY, PRNV…VMGM, and YYYG…LMAA.

It belongs to the TMEM14 family. Interacts with IQGAP1; this interaction promotes phosphorylation and nuclear translocation of IQGAP1. As to expression, mainly expressed in the outer subventricular zone (OSVZ) of the fetal brains.

Its subcellular location is the membrane. Its function is as follows. Primate-specific protein involved in cortical expansion and folding in the developing neocortex. May drive neural progenitor proliferation through nuclear translocation of IQGAP1, which in turn promotes G1/S cell cycle transitions. The chain is Transmembrane protein 14B (TMEM14B) from Homo sapiens (Human).